Reading from the N-terminus, the 171-residue chain is Neudesin (171 aa).

An N-terminal signal peptide occupies residues 1–30 (MARPAPWWWLRPLAALALALALVRVPSARA). The region spanning 43-128 (VRLFTEEELA…KELEALDDIF (86 aa)) is the Cytochrome b5 heme-binding domain. K135 is modified (N6-acetyllysine). The tract at residues 151 to 171 (GSPNLDFKPEDQPHFDIKDEF) is disordered. Basic and acidic residues predominate over residues 157–171 (FKPEDQPHFDIKDEF).

The protein belongs to the cytochrome b5 family. MAPR subfamily. Interacts with PINK1 and PARK7.

The protein resides in the secreted. It is found in the extracellular space. It localises to the mitochondrion. The protein localises to the endoplasmic reticulum. In terms of biological role, acts as a neurotrophic factor in postnatal mature neurons enhancing neuronal survival. Promotes cell proliferation and neurogenesis in undifferentiated neural progenitor cells at the embryonic stage and inhibits differentiation of astrocytes. Its neurotrophic activity is exerted via MAPK1/ERK2, MAPK3/ERK1 and AKT1/AKT pathways. Neurotrophic activity is enhanced by binding to heme. Also acts as an anorexigenic neurotrophic factor that contributes to energy balance. In Rattus norvegicus (Rat), this protein is Neudesin.